The chain runs to 641 residues: 1-deoxy-D-xylulose-5-phosphate synthase (641 aa).

Thiamine diphosphate is bound by residues His79 and 120–122 (GHS). Asp151 contacts Mg(2+). Residues 152–153 (GS), Asn180, Tyr290, and Glu372 contribute to the thiamine diphosphate site. Mg(2+) is bound at residue Asn180.

The protein belongs to the transketolase family. DXPS subfamily. In terms of assembly, homodimer. Mg(2+) is required as a cofactor. Requires thiamine diphosphate as cofactor.

The enzyme catalyses D-glyceraldehyde 3-phosphate + pyruvate + H(+) = 1-deoxy-D-xylulose 5-phosphate + CO2. The protein operates within metabolic intermediate biosynthesis; 1-deoxy-D-xylulose 5-phosphate biosynthesis; 1-deoxy-D-xylulose 5-phosphate from D-glyceraldehyde 3-phosphate and pyruvate: step 1/1. Its function is as follows. Catalyzes the acyloin condensation reaction between C atoms 2 and 3 of pyruvate and glyceraldehyde 3-phosphate to yield 1-deoxy-D-xylulose-5-phosphate (DXP). The chain is 1-deoxy-D-xylulose-5-phosphate synthase from Rhodopseudomonas palustris (strain TIE-1).